Here is a 535-residue protein sequence, read N- to C-terminus: Heat shock factor protein 2 (535 aa).

Glycyl lysine isopeptide (Lys-Gly) (interchain with G-Cter in SUMO2) cross-links involve residues Lys-2, Lys-82, Lys-135, Lys-139, Lys-151, Lys-210, Lys-218, and Lys-237. A DNA-binding region spans residues Val-7 to Ser-112. The tract at residues Asn-119–Val-192 is hydrophobic repeat HR-A/B. The disordered stretch occupies residues Gln-298–Ala-325. Low complexity predominate over residues Gly-313 to Ala-325. A hydrophobic repeat HR-C region spans residues Leu-359 to Ile-384. The segment at Thr-418 to Pro-437 is disordered. Residues Val-426 to Pro-437 show a composition bias toward basic and acidic residues.

Belongs to the HSF family. In terms of assembly, DNA-binding homotrimer in stressed or heat shocked cells, otherwise found as a homodimer. Isoform alpha is expressed predominantly in testis while isoform beta is expressed predominantly in heart and brain.

It is found in the cytoplasm. The protein localises to the nucleus. Its function is as follows. DNA-binding protein that specifically binds heat shock promoter elements (HSE) and activates transcription. In higher eukaryotes, HSF is unable to bind to the HSE unless the cells are heat shocked. HSF2 is expressed in a form that binds DNA constitutively but loses DNA binding by incubation at greater than 41 degrees C. The protein is Heat shock factor protein 2 (Hsf2) of Mus musculus (Mouse).